An 879-amino-acid polypeptide reads, in one-letter code: Interference hedgehog (879 aa).

Positions 1-20 are cleaved as a signal peptide; sequence MTLLTSSLLLFSLLTSRLEA. Residues 21 to 703 are Extracellular-facing; it reads IPVLEKSPAH…ETFNMSPMLT (683 aa). 4 consecutive Ig-like C2-type domains span residues 45-142, 132-232, 252-340, and 346-432; these read PGVR…IARL, PLVV…ERIQ, PHLL…YIKV, and PQIV…LQVN. Cystine bridges form between Cys68/Cys126, Cys173/Cys220, Cys276/Cys324, and Cys367/Cys414. Residues Asn102 and Asn209 are each glycosylated (N-linked (GlcNAc...) asparagine). A disordered region spans residues 426–467; the sequence is GTLLQVNPKQIQEPRESGGTHRPKPNQGSKQKQMYPPSPPNV. Fibronectin type-III domains follow at residues 461–567 and 575–670; these read PPSP…LQPG and VPEL…TQRP. Residue Asn466 is glycosylated (N-linked (GlcNAc...) asparagine). Heparin is bound by residues Arg497, Lys501, Lys503, and Arg541. A glycan (N-linked (GlcNAc...) asparagine) is linked at Asn557. The segment at 662 to 698 is disordered; that stretch reads LKQGRTQRPKTSTTEEPTLQMGDRDTTTPSHNETFNM. 2 stretches are compositionally biased toward polar residues: residues 665–678 and 688–698; these read GRTQ…TEEP and TTPSHNETFNM. Asn693 is a glycosylation site (N-linked (GlcNAc...) asparagine). A helical membrane pass occupies residues 704–724; it reads GTLGGGAVLTLLLISICLCVC. At 725–879 the chain is on the cytoplasmic side; that stretch reads RRRSSRSRGN…SSGSLNSVGV (155 aa). The segment at 728 to 879 is disordered; that stretch reads SSRSRGNNPN…SSGSLNSVGV (152 aa). 2 stretches are compositionally biased toward low complexity: residues 822–836 and 863–879; these read RAGG…NNNN and SSRS…SVGV.

The protein belongs to the immunoglobulin superfamily. IHOG family. As to quaternary structure, homodimer. Heterotetramer; 2 iHog chains bind 2 hh chains when facilitated by heparin, heparin is required to promote high-affinity interactions between hh and iHog.

The protein localises to the membrane. Its function is as follows. Mediates response to the active Hedgehog (Hh) protein signal in embryos, functioning upstream or at the level of patched (ptc). The polypeptide is Interference hedgehog (Drosophila erecta (Fruit fly)).